The primary structure comprises 240 residues: uncharacterized protein (240 aa).

An N-terminal signal peptide occupies residues 1–30; that stretch reads MNKSGMSLIITMLLLIGTAIVIGAAYYAWS.

This is an uncharacterized protein from Methanocaldococcus jannaschii (strain ATCC 43067 / DSM 2661 / JAL-1 / JCM 10045 / NBRC 100440) (Methanococcus jannaschii).